A 174-amino-acid polypeptide reads, in one-letter code: MLKYGTPFNFSRWIDEHAHLLKPPVGNQQVWQDSDFIVTVVGGPNHRTDYHDDPFEEFFYQLRGNAYLHLWIDGKRERVDLKEGDMFLLPPHVRHSPQRPEAGSACLVIERQRPAGVVDGFEWYCDACGHLVHRVEVQLKSIVDDLPPLFDAFYASDTLRRCAHCGHMHPGKAT.

Arginine 47 lines the O2 pocket. 3 residues coordinate Fe cation: histidine 51, glutamate 57, and histidine 95. Glutamate 57 serves as a coordination point for substrate. Substrate is bound by residues arginine 99 and glutamate 110. Cysteine 125, cysteine 128, cysteine 162, and cysteine 165 together coordinate Fe cation.

This sequence belongs to the 3-HAO family. As to quaternary structure, homodimer. Fe(2+) is required as a cofactor.

It catalyses the reaction 3-hydroxyanthranilate + O2 = (2Z,4Z)-2-amino-3-carboxymuconate 6-semialdehyde. The protein operates within cofactor biosynthesis; NAD(+) biosynthesis; quinolinate from L-kynurenine: step 3/3. In terms of biological role, catalyzes the oxidative ring opening of 3-hydroxyanthranilate to 2-amino-3-carboxymuconate semialdehyde, which spontaneously cyclizes to quinolinate. In Burkholderia lata (strain ATCC 17760 / DSM 23089 / LMG 22485 / NCIMB 9086 / R18194 / 383), this protein is 3-hydroxyanthranilate 3,4-dioxygenase.